The sequence spans 545 residues: Bifunctional purine biosynthesis protein PurH (545 aa).

In terms of domain architecture, MGS-like spans 1-150 (MTNTNRPIRR…KNHATVAIVT (150 aa)).

The protein belongs to the PurH family.

It catalyses the reaction (6R)-10-formyltetrahydrofolate + 5-amino-1-(5-phospho-beta-D-ribosyl)imidazole-4-carboxamide = 5-formamido-1-(5-phospho-D-ribosyl)imidazole-4-carboxamide + (6S)-5,6,7,8-tetrahydrofolate. The catalysed reaction is IMP + H2O = 5-formamido-1-(5-phospho-D-ribosyl)imidazole-4-carboxamide. It functions in the pathway purine metabolism; IMP biosynthesis via de novo pathway; 5-formamido-1-(5-phospho-D-ribosyl)imidazole-4-carboxamide from 5-amino-1-(5-phospho-D-ribosyl)imidazole-4-carboxamide (10-formyl THF route): step 1/1. The protein operates within purine metabolism; IMP biosynthesis via de novo pathway; IMP from 5-formamido-1-(5-phospho-D-ribosyl)imidazole-4-carboxamide: step 1/1. This is Bifunctional purine biosynthesis protein PurH from Bifidobacterium longum (strain DJO10A).